A 397-amino-acid chain; its full sequence is Elongation factor Tu 1 (397 aa).

A tr-type G domain is found at 10 to 207 (KPHVNVGTIG…TLDSYIPEPV (198 aa)). The segment at 19 to 26 (GHVDHGKT) is G1. 19-26 (GHVDHGKT) serves as a coordination point for GTP. Position 26 (Thr-26) interacts with Mg(2+). The interval 60 to 64 (GITIN) is G2. Residues 81–84 (DCPG) are G3. GTP-binding positions include 81 to 85 (DCPGH) and 136 to 139 (NKAD). The interval 136–139 (NKAD) is G4. Positions 174-176 (SAL) are G5.

It belongs to the TRAFAC class translation factor GTPase superfamily. Classic translation factor GTPase family. EF-Tu/EF-1A subfamily. Monomer.

The protein localises to the cytoplasm. The enzyme catalyses GTP + H2O = GDP + phosphate + H(+). Functionally, GTP hydrolase that promotes the GTP-dependent binding of aminoacyl-tRNA to the A-site of ribosomes during protein biosynthesis. This Stutzerimonas stutzeri (strain A1501) (Pseudomonas stutzeri) protein is Elongation factor Tu 1.